Reading from the N-terminus, the 184-residue chain is ATP-dependent protease subunit HslV (184 aa).

T12 is an active-site residue. Na(+) is bound by residues A166, C169, and T172.

The protein belongs to the peptidase T1B family. HslV subfamily. As to quaternary structure, a double ring-shaped homohexamer of HslV is capped on each side by a ring-shaped HslU homohexamer. The assembly of the HslU/HslV complex is dependent on binding of ATP.

It is found in the cytoplasm. It catalyses the reaction ATP-dependent cleavage of peptide bonds with broad specificity.. Allosterically activated by HslU binding. Protease subunit of a proteasome-like degradation complex believed to be a general protein degrading machinery. This Nitrobacter winogradskyi (strain ATCC 25391 / DSM 10237 / CIP 104748 / NCIMB 11846 / Nb-255) protein is ATP-dependent protease subunit HslV.